A 117-amino-acid polypeptide reads, in one-letter code: Ubiquitin-like protein 3 (117 aa).

The Ubiquitin-like domain maps to 10-88 (INLRLILVSG…PFGKTTVMHL (79 aa)). The S-palmitoyl cysteine moiety is linked to residue cysteine 113. Cysteine 114 is modified (cysteine methyl ester). Cysteine 114 carries the S-geranylgeranyl cysteine lipid modification. A propeptide spans 115–117 (VIL) (removed in mature form).

Its subcellular location is the cell membrane. This Mus musculus (Mouse) protein is Ubiquitin-like protein 3 (Ubl3).